The sequence spans 169 residues: MSEVEYRCFVGGLAWATNDEDLQRTFSQFGDVIDSKIINDRESGRSRGFGFVTFKDEKAMRDAIEEMNGKELDGRVITVNEAQSRGSGGGGGGRGGSGGGYRSGGGGGYSGGGGGGYSGGGGGGYERRSGGYGSGGGGGGRGYGGGGRREGGGYGGGDGGSYGGGGGGW.

Positions 6–84 (YRCFVGGLAW…RVITVNEAQS (79 aa)) constitute an RRM domain. Arginine 47 is modified (ADP-ribosylarginine; by HopU1). The interval 80 to 99 (NEAQSRGSGGGGGGRGGSGG) is disordered. Residues 86 to 99 (GSGGGGGGRGGSGG) are compositionally biased toward gly residues. Residues 86–168 (GSGGGGGGRG…GGSYGGGGGG (83 aa)) form a glycine-rich (GR) required for cell-to-cell movement region. The interval 95–143 (GGSGGGYRSGGGGGYSGGGGGGYSGGGGGGYERRSGGYGSGGGGGGRGY) is nuclear targeting sequence (M9). Serine 103 is subject to Phosphoserine. A disordered region spans residues 130 to 169 (GGYGSGGGGGGRGYGGGGRREGGGYGGGDGGSYGGGGGGW).

Belongs to the GR-RBP family. As to quaternary structure, interacts with TRN1. Binds to small phloem-mobile single-stranded RNAs (ss-sRNA, e.g. small interfering RNA (siRNA) and microRNA (miRNA)) in the phloeme exudate, including viral-derived sRNA (vsiRNA). In terms of processing, ADP-ribosylated by the Pseudomonas syringae type III effector HopU1. ADP-ribosylation reduces the ability of the protein to bind RNA. As to expression, ubiquitous.

Its subcellular location is the cytoplasm. The protein localises to the nucleus. The protein resides in the secreted. Functionally, plays a role in RNA transcription or processing during stress. Binds RNAs and DNAs sequence with a preference to single-stranded nucleic acids. Involved in mRNA alternative splicing of numerous targets by modulating splice site selection. Negatively regulates the circadian oscillations of its own transcript as well as RBG7 transcript. Forms an interlocked post-transcriptional negative feedback loop with the RBG7 autoregulatory circuit. Both proteins negatively autoregulate and reciprocally crossregulate by binding to their pre-mRNAs and promoting unproductive splicing coupled to degradation via the NMD pathway. Target of the Pseudomonas syringae type III effector HopU1. Mediates cell-to-cell trafficking of RNA interference (RNAi) signals (small RNAs (sRNA), e.g. small interfering RNA (siRNA) and microRNA (miRNA)) which regulate growth and development, as well as responses to environmental inputs, including pathogen attack; can compromise zucchini yellow mosaic virus (ZYMV) and tobacco rattle virus (TRV) infections at the early stage. This Arabidopsis thaliana (Mouse-ear cress) protein is Glycine-rich RNA-binding protein 8.